The following is a 137-amino-acid chain: Proofreading thioesterase EntH (137 aa).

Catalysis depends on Glu63, which acts as the Nucleophile or proton acceptor.

The protein belongs to the thioesterase PaaI family. In terms of assembly, homotetramer. Dimer of dimers. Interacts specifically with the aryl carrier protein (ArCP) domain of EntB.

The protein localises to the cytoplasm. The protein operates within siderophore biosynthesis; enterobactin biosynthesis. In terms of biological role, required for optimal enterobactin synthesis. Acts as a proofreading enzyme that prevents EntB misacylation by hydrolyzing the thioester bound existing between EntB and wrongly charged molecules. The polypeptide is Proofreading thioesterase EntH (entH) (Klebsiella pneumoniae subsp. pneumoniae (strain ATCC 700721 / MGH 78578)).